We begin with the raw amino-acid sequence, 430 residues long: Glial fibrillary acidic protein (430 aa).

The head stretch occupies residues 1–69 (MERRRITSAR…KETRASERAE (69 aa)). Residue Thr-7 is modified to Phosphothreonine; by AURKB and ROCK1. An Omega-N-methylarginine modification is found at Arg-11. Position 12 is a phosphoserine; by AURKB and ROCK1 (Ser-12). Arg-20 is modified (omega-N-methylarginine). Arg-33 carries the post-translational modification Citrulline. Ser-35 is modified (phosphoserine; by AURKB and ROCK1). At Thr-40 the chain carries Phosphothreonine. Residues 66–374 (ERAEMMELND…KLLEGEENRI (309 aa)) form the IF rod domain. Residues 70–101 (MMELNDRFASYIEKVRFLEQQNKALAAELNQL) are coil 1A. Ser-79 is subject to Phosphoserine. The interval 102-112 (RAKEPTKLADV) is linker 1. Phosphothreonine is present on residues Thr-107 and Thr-147. A coil 1B region spans residues 113–211 (YQAELRELRL…EEEVRELREQ (99 aa)). Positions 212–227 (LAQQQVHVEMDVAKPD) are linker 12. A coil 2A region spans residues 228-249 (LTAALREIRTQYEAVATSNMQE). The interval 250–253 (TEEW) is linker 2. The tract at residues 254-374 (YRSKFADLTD…KLLEGEENRI (121 aa)) is coil 2B. Phosphoserine is present on Ser-266. Arg-267 is subject to Citrulline. Ser-320 is subject to Phosphoserine. Positions 375–430 (TIPVQTFSNLQIRETSLDTKSVSEGHLKRNIVVKTVEMRDGEVIKDSKQEHKDVVM) are tail. Thr-380 carries the phosphothreonine modification. Ser-382 is subject to Phosphoserine. A citrulline mark is found at Arg-403 and Arg-413.

The protein belongs to the intermediate filament family. As to quaternary structure, interacts with SYNM. Interacts with PSEN1 (via N-terminus). Post-translationally, phosphorylated by PKN1. Brain; isoform 2 expressed at 20-fold lower level than isoform 1.

It is found in the cytoplasm. In terms of biological role, GFAP, a class-III intermediate filament, is a cell-specific marker that, during the development of the central nervous system, distinguishes astrocytes from other glial cells. The chain is Glial fibrillary acidic protein (Gfap) from Mus musculus (Mouse).